The chain runs to 37 residues: Large ribosomal subunit protein bL36c (37 aa).

The protein belongs to the bacterial ribosomal protein bL36 family.

Its subcellular location is the plastid. This Cuscuta reflexa (Southern Asian dodder) protein is Large ribosomal subunit protein bL36c.